Consider the following 292-residue polypeptide: Protoheme IX farnesyltransferase (292 aa).

9 helical membrane-spanning segments follow: residues 11–31 (FGIV…GFQI), 37–57 (WKIF…SLAL), 85–105 (AAAG…LFKL), 108–128 (VAGW…TLWW), 133–153 (VFAA…GYAV), 163–183 (SLYL…VLAI), 199–219 (VALG…VYVG), 223–243 (AAPM…PFVF), and 261–281 (WLAF…IPVI).

The protein belongs to the UbiA prenyltransferase family. Protoheme IX farnesyltransferase subfamily.

It localises to the cell inner membrane. It catalyses the reaction heme b + (2E,6E)-farnesyl diphosphate + H2O = Fe(II)-heme o + diphosphate. It functions in the pathway porphyrin-containing compound metabolism; heme O biosynthesis; heme O from protoheme: step 1/1. Its function is as follows. Converts heme B (protoheme IX) to heme O by substitution of the vinyl group on carbon 2 of heme B porphyrin ring with a hydroxyethyl farnesyl side group. This Bdellovibrio bacteriovorus (strain ATCC 15356 / DSM 50701 / NCIMB 9529 / HD100) protein is Protoheme IX farnesyltransferase.